The following is a 374-amino-acid chain: tRNA-specific 2-thiouridylase MnmA (374 aa).

ATP is bound by residues glycine 17–serine 24 and methionine 43. Residues asparagine 103 to aspartate 105 are interaction with target base in tRNA. Cysteine 108 serves as the catalytic Nucleophile. Cysteine 108 and cysteine 204 form a disulfide bridge. Glycine 132 is a binding site for ATP. An interaction with tRNA region spans residues lysine 154–glutamine 156. Cysteine 204 serves as the catalytic Cysteine persulfide intermediate. Residues arginine 316–tyrosine 317 form an interaction with tRNA region.

Belongs to the MnmA/TRMU family.

The protein resides in the cytoplasm. The catalysed reaction is S-sulfanyl-L-cysteinyl-[protein] + uridine(34) in tRNA + AH2 + ATP = 2-thiouridine(34) in tRNA + L-cysteinyl-[protein] + A + AMP + diphosphate + H(+). Its function is as follows. Catalyzes the 2-thiolation of uridine at the wobble position (U34) of tRNA, leading to the formation of s(2)U34. The protein is tRNA-specific 2-thiouridylase MnmA of Pseudomonas fluorescens (strain Pf0-1).